Here is a 197-residue protein sequence, read N- to C-terminus: Allatostatins (197 aa).

The first 27 residues, 1–27 (MRSRTSVLTSSLAFLYFFGIVGRSALA), serve as a signal peptide directing secretion. A propeptide spanning residues 28–56 (MEETPASSMNLQHYNNMLNPMVFDDTMPE) is cleaved from the precursor. Ile76 bears the Isoleucine amide mark. Residues 80–86 (WIDTNDN) constitute a propeptide that is removed on maturation. Leucine amide is present on residues Leu96, Leu106, Leu154, and Leu184. The segment at 161-197 (YSGGQPLGSKRPNDMLSQRYHFGLGKRMSEDEEESSQ) is disordered. Positions 188-197 (MSEDEEESSQ) are excised as a propeptide.

The protein belongs to the allatostatin family.

The protein resides in the secreted. Functionally, neuropeptides. The polypeptide is Allatostatins (Apis mellifera (Honeybee)).